A 479-amino-acid polypeptide reads, in one-letter code: POU domain, class 2, transcription factor 2 (479 aa).

5 disordered regions span residues 1–86 (MVHS…AQPH), 166–200 (TQAV…PSDL), 275–298 (SSLP…GRRR), 357–393 (PCSA…SQAS), and 409–479 (TLHP…PYQP). Residues 12-37 (RMSKPLEAEKQGLDSPSEHTDTERNG) show a composition bias toward basic and acidic residues. The span at 38 to 60 (PDTNHQNPQNKTSPFSVSPTGPS) shows a compositional bias: polar residues. The segment covering 76-85 (APLPPQPAQP) has biased composition (pro residues). The 75-residue stretch at 195–269 (EEPSDLEELE…LLEKWLNDAE (75 aa)) folds into the POU-specific domain. The segment covering 275–288 (SSLPSPNQLSSPSL) has biased composition (low complexity). Positions 297–356 (RRKKRTSIETNVRFALEKSFLANQKPTSEEILLIAEQLHMEKEVIRVWFCNRRQKEKRIN) form a DNA-binding region, homeobox. A leucine-zipper region spans residues 389-410 (LSQASSSLSTTVTTLSSAVGTL). Residues 416 to 425 (AGGGGGGGGA) show a composition bias toward gly residues.

The protein belongs to the POU transcription factor family. Class-2 subfamily. In terms of assembly, interacts with NR3C1, AR and PGR. Interacts with POU2AF1; the interaction increases POU2F2 transactivation activity. Isoform 3 is B-cell specific. Isoform 5 is expressed in B-cells and the immunoglobulin-expressing T-cell line MOLT-4, but not in the T-cell line BW5147.

It localises to the cytoplasm. The protein resides in the nucleus. With respect to regulation, transactivation activity is enhanced by transcriptional coactivator POU2AF1. Transcription factor that specifically binds to the octamer motif (5'-ATTTGCAT-3'). Regulates IL6 expression in B cells with POU2AF1. Regulates transcription in a number of tissues in addition to activating immunoglobulin gene expression. Modulates transcription transactivation by NR3C1, AR and PGR. In terms of biological role, activates the U2 small nuclear RNA (snRNA) promoter. This is POU domain, class 2, transcription factor 2 from Homo sapiens (Human).